We begin with the raw amino-acid sequence, 264 residues long: ATP synthase subunit a (264 aa).

Helical transmembrane passes span 29 to 49 (TWHI…LWIF), 90 to 110 (IAPL…MDMI), 134 to 154 (DVNI…YYSI), 177 to 197 (IPVN…SLAL), 208 to 228 (LIFI…SLGV), and 235 to 255 (LIFH…LTIV).

This sequence belongs to the ATPase A chain family. F-type ATPases have 2 components, CF(1) - the catalytic core - and CF(0) - the membrane proton channel. CF(1) has five subunits: alpha(3), beta(3), gamma(1), delta(1), epsilon(1). CF(0) has three main subunits: a(1), b(2) and c(9-12). The alpha and beta chains form an alternating ring which encloses part of the gamma chain. CF(1) is attached to CF(0) by a central stalk formed by the gamma and epsilon chains, while a peripheral stalk is formed by the delta and b chains.

It localises to the cell inner membrane. Its function is as follows. Key component of the proton channel; it plays a direct role in the translocation of protons across the membrane. The chain is ATP synthase subunit a from Shewanella oneidensis (strain ATCC 700550 / JCM 31522 / CIP 106686 / LMG 19005 / NCIMB 14063 / MR-1).